Consider the following 419-residue polypeptide: Tyrosine--tRNA ligase (419 aa).

Tyr-42 contributes to the L-tyrosine binding site. The 'HIGH' region motif lies at 47–56 (ATAPSLHVGS). Tyr-179 and Gln-183 together coordinate L-tyrosine. Residues 239-243 (KMGKT) carry the 'KMSKS' region motif. Position 242 (Lys-242) interacts with ATP. The S4 RNA-binding domain occupies 353–418 (IVLANLFADA…GKKKIVLVKP (66 aa)).

It belongs to the class-I aminoacyl-tRNA synthetase family. TyrS type 1 subfamily. Homodimer.

The protein localises to the cytoplasm. It carries out the reaction tRNA(Tyr) + L-tyrosine + ATP = L-tyrosyl-tRNA(Tyr) + AMP + diphosphate + H(+). Its function is as follows. Catalyzes the attachment of tyrosine to tRNA(Tyr) in a two-step reaction: tyrosine is first activated by ATP to form Tyr-AMP and then transferred to the acceptor end of tRNA(Tyr). This is Tyrosine--tRNA ligase from Caulobacter sp. (strain K31).